Here is a 378-residue protein sequence, read N- to C-terminus: Palmitoyltransferase PFA4 (378 aa).

The Cytoplasmic segment spans residues M1–W9. A helical transmembrane segment spans residues L10–I30. Residues L31–Q40 are Lumenal-facing. The chain crosses the membrane as a helical span at residues I41–N61. The Cytoplasmic segment spans residues P62–N119. The DHHC domain maps to N78–F128. C108 acts as the S-palmitoyl cysteine intermediate in catalysis. A helical transmembrane segment spans residues Y120–I140. Over Q141–L164 the chain is Lumenal. A helical membrane pass occupies residues I165 to F185. Residues L186–E378 lie on the Cytoplasmic side of the membrane.

It belongs to the DHHC palmitoyltransferase family. PFA4 subfamily. Post-translationally, autopalmitoylated.

The protein localises to the endoplasmic reticulum membrane. The enzyme catalyses L-cysteinyl-[protein] + hexadecanoyl-CoA = S-hexadecanoyl-L-cysteinyl-[protein] + CoA. Mediates the reversible addition of palmitate to target proteins, thereby regulating their membrane association and biological function. Palmitoylates several amino acid permeases. Palmitoylates chitin synthase CHS3, which is required for its proper export from the ER. Can palmitoylate RAS2 in vitro. The polypeptide is Palmitoyltransferase PFA4 (Saccharomyces cerevisiae (strain ATCC 204508 / S288c) (Baker's yeast)).